A 295-amino-acid chain; its full sequence is Phosphatidylserine decarboxylase proenzyme (295 aa).

Active-site charge relay system; for autoendoproteolytic cleavage activity residues include aspartate 90, histidine 147, and serine 254. Serine 254 serves as the catalytic Schiff-base intermediate with substrate; via pyruvic acid; for decarboxylase activity. The residue at position 254 (serine 254) is a Pyruvic acid (Ser); by autocatalysis.

The protein belongs to the phosphatidylserine decarboxylase family. PSD-B subfamily. Prokaryotic type I sub-subfamily. In terms of assembly, heterodimer of a large membrane-associated beta subunit and a small pyruvoyl-containing alpha subunit. The cofactor is pyruvate. Is synthesized initially as an inactive proenzyme. Formation of the active enzyme involves a self-maturation process in which the active site pyruvoyl group is generated from an internal serine residue via an autocatalytic post-translational modification. Two non-identical subunits are generated from the proenzyme in this reaction, and the pyruvate is formed at the N-terminus of the alpha chain, which is derived from the carboxyl end of the proenzyme. The autoendoproteolytic cleavage occurs by a canonical serine protease mechanism, in which the side chain hydroxyl group of the serine supplies its oxygen atom to form the C-terminus of the beta chain, while the remainder of the serine residue undergoes an oxidative deamination to produce ammonia and the pyruvoyl prosthetic group on the alpha chain. During this reaction, the Ser that is part of the protease active site of the proenzyme becomes the pyruvoyl prosthetic group, which constitutes an essential element of the active site of the mature decarboxylase.

Its subcellular location is the cell membrane. It carries out the reaction a 1,2-diacyl-sn-glycero-3-phospho-L-serine + H(+) = a 1,2-diacyl-sn-glycero-3-phosphoethanolamine + CO2. It participates in phospholipid metabolism; phosphatidylethanolamine biosynthesis; phosphatidylethanolamine from CDP-diacylglycerol: step 2/2. Its function is as follows. Catalyzes the formation of phosphatidylethanolamine (PtdEtn) from phosphatidylserine (PtdSer). The polypeptide is Phosphatidylserine decarboxylase proenzyme (Sodalis glossinidius (strain morsitans)).